Reading from the N-terminus, the 420-residue chain is MGICCSKGKEELEEEGFPWKHDAFFHDQLWSAGVSMHTKQGWKGANQDAMTTCQDFAGHKGQIFCGVFDGHGPLGREVARHVRDVLPVKLSSSLALKTEQDPSSNTDKETLEKSDCTSLSDTSNEKQLLSTWKNIFVKTFEDVDEDLRQHSGIDCICSGTTAVTVVRQGDHLIIANLGDSRAVLCTRDSKDRPISVQLTTDLKPNLPSEAERILNSKGRVFAMDDEPDVPRMWLPDQDAPGLAMARAFGDFCLKSHGLICTPEVYYRKLSAKDDFLVLATDGIWDVLSNKEVIKIVSSATDHSKAAKQLVERAVRTWRRKFPTSMVDDCAVVCLFLKPSPSSSESTPGDAKPPQAVSFTGSFRKVLGGGGGEAEEGTNVWRALEGVARVNSVVRLPRMGAVLSWRRRSTSLEEDDEARID.

The 304-residue stretch at 33-336 (GVSMHTKQGW…DDCAVVCLFL (304 aa)) folds into the PPM-type phosphatase domain. Mn(2+) contacts are provided by Asp69 and Gly70. The segment covering 96 to 105 (LKTEQDPSSN) has biased composition (polar residues). The interval 96–119 (LKTEQDPSSNTDKETLEKSDCTSL) is disordered. The span at 106–115 (TDKETLEKSD) shows a compositional bias: basic and acidic residues. Mn(2+) contacts are provided by Asp281 and Asp327.

This sequence belongs to the PP2C family. Mg(2+) is required as a cofactor. The cofactor is Mn(2+).

The catalysed reaction is O-phospho-L-seryl-[protein] + H2O = L-seryl-[protein] + phosphate. It carries out the reaction O-phospho-L-threonyl-[protein] + H2O = L-threonyl-[protein] + phosphate. The chain is Probable protein phosphatase 2C 73 from Oryza sativa subsp. japonica (Rice).